A 239-amino-acid polypeptide reads, in one-letter code: Fatty acid metabolism regulator protein (239 aa).

The HTH gntR-type domain maps to 6–74 (QSPAGFAEEY…HGKPTKVNNF (69 aa)). The H-T-H motif DNA-binding region spans 34 to 53 (ERELSELIGVTRTTLREVLQ).

Homodimer.

The protein localises to the cytoplasm. Multifunctional regulator of fatty acid metabolism. The protein is Fatty acid metabolism regulator protein of Cronobacter sakazakii (strain ATCC BAA-894) (Enterobacter sakazakii).